Consider the following 139-residue polypeptide: Peptide methionine sulfoxide reductase MsrB (139 aa).

Residues 14–137 (DEEWRRELTP…NSISLDFQPE (124 aa)) form the MsrB domain. Cysteine 53, cysteine 56, cysteine 102, and cysteine 105 together coordinate Zn(2+). Cysteine 126 (nucleophile) is an active-site residue.

This sequence belongs to the MsrB Met sulfoxide reductase family. The cofactor is Zn(2+).

The catalysed reaction is L-methionyl-[protein] + [thioredoxin]-disulfide + H2O = L-methionyl-(R)-S-oxide-[protein] + [thioredoxin]-dithiol. This is Peptide methionine sulfoxide reductase MsrB from Leifsonia xyli subsp. xyli (strain CTCB07).